A 341-amino-acid chain; its full sequence is Glycerol-3-phosphate dehydrogenase [NAD(P)+] (341 aa).

Positions 11, 12, 32, and 106 each coordinate NADPH. Residues Lys106, Gly137, and Thr139 each contribute to the sn-glycerol 3-phosphate site. Ala141 contacts NADPH. Residues Lys192, Asp245, Ser255, Arg256, and Asn257 each coordinate sn-glycerol 3-phosphate. Lys192 (proton acceptor) is an active-site residue. Arg256 is an NADPH binding site. NADPH contacts are provided by Val280 and Glu282.

Belongs to the NAD-dependent glycerol-3-phosphate dehydrogenase family.

The protein resides in the cytoplasm. It carries out the reaction sn-glycerol 3-phosphate + NAD(+) = dihydroxyacetone phosphate + NADH + H(+). The enzyme catalyses sn-glycerol 3-phosphate + NADP(+) = dihydroxyacetone phosphate + NADPH + H(+). Its pathway is membrane lipid metabolism; glycerophospholipid metabolism. Its function is as follows. Catalyzes the reduction of the glycolytic intermediate dihydroxyacetone phosphate (DHAP) to sn-glycerol 3-phosphate (G3P), the key precursor for phospholipid synthesis. The chain is Glycerol-3-phosphate dehydrogenase [NAD(P)+] from Exiguobacterium sp. (strain ATCC BAA-1283 / AT1b).